A 135-amino-acid polypeptide reads, in one-letter code: Ribonuclease P protein component (135 aa).

Belongs to the RnpA family. In terms of assembly, consists of a catalytic RNA component (M1 or rnpB) and a protein subunit.

It catalyses the reaction Endonucleolytic cleavage of RNA, removing 5'-extranucleotides from tRNA precursor.. Its function is as follows. RNaseP catalyzes the removal of the 5'-leader sequence from pre-tRNA to produce the mature 5'-terminus. It can also cleave other RNA substrates such as 4.5S RNA. The protein component plays an auxiliary but essential role in vivo by binding to the 5'-leader sequence and broadening the substrate specificity of the ribozyme. The protein is Ribonuclease P protein component of Pseudomonas aeruginosa (strain ATCC 15692 / DSM 22644 / CIP 104116 / JCM 14847 / LMG 12228 / 1C / PRS 101 / PAO1).